The sequence spans 132 residues: uncharacterized protein (132 aa).

Residues Leu-66–Leu-86 traverse the membrane as a helical segment.

It is found in the membrane. This is an uncharacterized protein from Saccharomyces cerevisiae (strain ATCC 204508 / S288c) (Baker's yeast).